We begin with the raw amino-acid sequence, 244 residues long: 5-oxoprolinase subunit A (244 aa).

Belongs to the LamB/PxpA family. As to quaternary structure, forms a complex composed of PxpA, PxpB and PxpC.

The enzyme catalyses 5-oxo-L-proline + ATP + 2 H2O = L-glutamate + ADP + phosphate + H(+). In terms of biological role, catalyzes the cleavage of 5-oxoproline to form L-glutamate coupled to the hydrolysis of ATP to ADP and inorganic phosphate. This chain is 5-oxoprolinase subunit A, found in Escherichia coli (strain SE11).